We begin with the raw amino-acid sequence, 533 residues long: NAD(P)H-quinone oxidoreductase chain 4 2 (533 aa).

A run of 14 helical transmembrane segments spans residues 5-25, 33-53, 86-106, 114-134, 135-155, 168-188, 208-228, 242-262, 276-296, 310-330, 331-351, 384-404, 416-436, and 462-482; these read FPWL…IPVL, VRWY…MVFW, LAVP…FAAW, LFYF…AAQD, LILF…LISI, FILY…GMAF, ALEL…LPIF, SAPV…YGLI, FAPV…LTAF, ISHM…GLNG, AMLQ…LAGV, ASLA…FLGL, VGVI…LLSM, and TFIA…PKVA.

This sequence belongs to the complex I subunit 4 family.

It localises to the cellular thylakoid membrane. It carries out the reaction a plastoquinone + NADH + (n+1) H(+)(in) = a plastoquinol + NAD(+) + n H(+)(out). The catalysed reaction is a plastoquinone + NADPH + (n+1) H(+)(in) = a plastoquinol + NADP(+) + n H(+)(out). In terms of biological role, NDH-1 shuttles electrons from NAD(P)H, via FMN and iron-sulfur (Fe-S) centers, to quinones in the respiratory chain. The immediate electron acceptor for the enzyme in this species is believed to be plastoquinone. Couples the redox reaction to proton translocation (for every two electrons transferred, four hydrogen ions are translocated across the cytoplasmic membrane), and thus conserves the redox energy in a proton gradient. This chain is NAD(P)H-quinone oxidoreductase chain 4 2, found in Thermosynechococcus vestitus (strain NIES-2133 / IAM M-273 / BP-1).